Reading from the N-terminus, the 268-residue chain is Phosphate import ATP-binding protein PstB 3 (268 aa).

An ABC transporter domain is found at 15–254 (LRTENLNVYY…DATESIFNNP (240 aa)). ATP is bound at residue 47–54 (GPSGCGKS).

The protein belongs to the ABC transporter superfamily. Phosphate importer (TC 3.A.1.7) family. As to quaternary structure, the complex is composed of two ATP-binding proteins (PstB), two transmembrane proteins (PstC and PstA) and a solute-binding protein (PstS).

It is found in the cell inner membrane. The enzyme catalyses phosphate(out) + ATP + H2O = ADP + 2 phosphate(in) + H(+). Its function is as follows. Part of the ABC transporter complex PstSACB involved in phosphate import. Responsible for energy coupling to the transport system. This chain is Phosphate import ATP-binding protein PstB 3, found in Nostoc sp. (strain PCC 7120 / SAG 25.82 / UTEX 2576).